Consider the following 435-residue polypeptide: Mitochondrial distribution and morphology protein 12 (435 aa).

In terms of domain architecture, SMP-LTD spans 1–435; sequence MSIEVDWGAA…VYPSFWTFLV (435 aa). Disordered stretches follow at residues 73-113 and 186-268; these read DEDD…AINH and WNDS…TSEE. The span at 96–113 shows a compositional bias: basic and acidic residues; it reads THPELNESSFRDDNAINH. Positions 218 to 238 are enriched in low complexity; sequence SSNPTSRPSTSSTLPSHPSGS. The segment covering 251–268 has biased composition (basic and acidic residues); sequence HGSHPEEHGHLDDPTSEE.

The protein belongs to the MDM12 family. As to quaternary structure, component of the ER-mitochondria encounter structure (ERMES) or MDM complex, composed of mmm1, mdm10, mdm12 and mdm34. A mmm1 homodimer associates with one molecule of mdm12 on each side in a pairwise head-to-tail manner, and the SMP-LTD domains of mmm1 and mdm12 generate a continuous hydrophobic tunnel for phospholipid trafficking.

The protein localises to the mitochondrion outer membrane. The protein resides in the endoplasmic reticulum membrane. Component of the ERMES/MDM complex, which serves as a molecular tether to connect the endoplasmic reticulum (ER) and mitochondria. Components of this complex are involved in the control of mitochondrial shape and protein biogenesis, and function in nonvesicular lipid trafficking between the ER and mitochondria. Mdm12 is required for the interaction of the ER-resident membrane protein mmm1 and the outer mitochondrial membrane-resident beta-barrel protein mdm10. The mdm12-mmm1 subcomplex functions in the major beta-barrel assembly pathway that is responsible for biogenesis of all mitochondrial outer membrane beta-barrel proteins, and acts in a late step after the SAM complex. The mdm10-mdm12-mmm1 subcomplex further acts in the TOM40-specific pathway after the action of the mdm12-mmm1 complex. Essential for establishing and maintaining the structure of mitochondria and maintenance of mtDNA nucleoids. The chain is Mitochondrial distribution and morphology protein 12 from Aspergillus niger (strain ATCC MYA-4892 / CBS 513.88 / FGSC A1513).